We begin with the raw amino-acid sequence, 395 residues long: Small RNA 2'-O-methyltransferase (395 aa).

Aspartate 79 and serine 115 together coordinate S-adenosyl-L-methionine. Glutamate 133, glutamate 136, histidine 137, and histidine 182 together coordinate Mg(2+).

This sequence belongs to the methyltransferase superfamily. HEN1 family. Requires Mg(2+) as cofactor. As to expression, specifically expressed in testis.

The protein resides in the cytoplasm. The catalysed reaction is small RNA 3'-end nucleotide + S-adenosyl-L-methionine = small RNA 3'-end 2'-O-methylnucleotide + S-adenosyl-L-homocysteine + H(+). In terms of biological role, methyltransferase that adds a 2'-O-methyl group at the 3'-end of piRNAs, a class of 24 to 30 nucleotide RNAs that are generated by a Dicer-independent mechanism and are primarily derived from transposons and other repeated sequence elements. This probably protects the 3'-end of piRNAs from uridylation activity and subsequent degradation. Stabilization of piRNAs is essential for gametogenesis. This Mus musculus (Mouse) protein is Small RNA 2'-O-methyltransferase (Henmt1).